The chain runs to 160 residues: ATP synthase subunit b, chloroplastic (160 aa).

Residues 12 to 31 (NVINIAILVVILIRFARQVV) form a helical membrane-spanning segment.

Belongs to the ATPase B chain family. In terms of assembly, F-type ATPases have 2 components, F(1) - the catalytic core - and F(0) - the membrane proton channel. F(1) has five subunits: alpha(3), beta(3), gamma(1), delta(1), epsilon(1). F(0) has four main subunits: a(1), b(1), b'(1) and c(10-14). The alpha and beta chains form an alternating ring which encloses part of the gamma chain. F(1) is attached to F(0) by a central stalk formed by the gamma and epsilon chains, while a peripheral stalk is formed by the delta, b and b' chains.

The protein resides in the plastid. Its subcellular location is the chloroplast thylakoid membrane. F(1)F(0) ATP synthase produces ATP from ADP in the presence of a proton or sodium gradient. F-type ATPases consist of two structural domains, F(1) containing the extramembraneous catalytic core and F(0) containing the membrane proton channel, linked together by a central stalk and a peripheral stalk. During catalysis, ATP synthesis in the catalytic domain of F(1) is coupled via a rotary mechanism of the central stalk subunits to proton translocation. Functionally, component of the F(0) channel, it forms part of the peripheral stalk, linking F(1) to F(0). This is ATP synthase subunit b, chloroplastic from Cyanidioschyzon merolae (strain NIES-3377 / 10D) (Unicellular red alga).